The following is a 378-amino-acid chain: tRNA (guanine(26)-N(2))-dimethyltransferase (378 aa).

Positions lysine 4–isoleucine 374 constitute a Trm1 methyltransferase domain. 5 residues coordinate S-adenosyl-L-methionine: arginine 44, arginine 69, aspartate 87, aspartate 114, and alanine 115. Zn(2+)-binding residues include cysteine 246, cysteine 249, cysteine 263, and cysteine 266.

Belongs to the class I-like SAM-binding methyltransferase superfamily. Trm1 family.

The enzyme catalyses guanosine(26) in tRNA + 2 S-adenosyl-L-methionine = N(2)-dimethylguanosine(26) in tRNA + 2 S-adenosyl-L-homocysteine + 2 H(+). In terms of biological role, dimethylates a single guanine residue at position 26 of a number of tRNAs using S-adenosyl-L-methionine as donor of the methyl groups. This Saccharolobus solfataricus (strain ATCC 35092 / DSM 1617 / JCM 11322 / P2) (Sulfolobus solfataricus) protein is tRNA (guanine(26)-N(2))-dimethyltransferase.